We begin with the raw amino-acid sequence, 147 residues long: MTRKKFYLVREDMLTEAMQKTLEAKALLESGKKRKINEAVHEVGLSRSAFYKYKDGVFPFHTMTKEKIITLSINLEDRSGSLSAMLATVAEAEANVLTINQTIPLQGRANITLSIDTATMSLEIDELVEKIESMEAVEKVELVGSGS.

Residues 70–145 (TLSINLEDRS…AVEKVELVGS (76 aa)) form the ACT domain.

Belongs to the UPF0735 family.

This Halalkalibacterium halodurans (strain ATCC BAA-125 / DSM 18197 / FERM 7344 / JCM 9153 / C-125) (Bacillus halodurans) protein is UPF0735 ACT domain-containing protein BH1214.